The chain runs to 363 residues: Holliday junction branch migration complex subunit RuvB (363 aa).

The interval M1–D32 is disordered. The large ATPase domain (RuvB-L) stretch occupies residues A27–Y207. ATP is bound by residues L46, R47, G88, K91, T92, T93, E154–F156, R197, Y207, and R244. Mg(2+) is bound at residue T92. The segment at D208–D278 is small ATPAse domain (RuvB-S). The head domain (RuvB-H) stretch occupies residues E281 to Y363. R336 and R341 together coordinate DNA.

It belongs to the RuvB family. As to quaternary structure, homohexamer. Forms an RuvA(8)-RuvB(12)-Holliday junction (HJ) complex. HJ DNA is sandwiched between 2 RuvA tetramers; dsDNA enters through RuvA and exits via RuvB. An RuvB hexamer assembles on each DNA strand where it exits the tetramer. Each RuvB hexamer is contacted by two RuvA subunits (via domain III) on 2 adjacent RuvB subunits; this complex drives branch migration. In the full resolvosome a probable DNA-RuvA(4)-RuvB(12)-RuvC(2) complex forms which resolves the HJ.

The protein localises to the cytoplasm. The catalysed reaction is ATP + H2O = ADP + phosphate + H(+). In terms of biological role, the RuvA-RuvB-RuvC complex processes Holliday junction (HJ) DNA during genetic recombination and DNA repair, while the RuvA-RuvB complex plays an important role in the rescue of blocked DNA replication forks via replication fork reversal (RFR). RuvA specifically binds to HJ cruciform DNA, conferring on it an open structure. The RuvB hexamer acts as an ATP-dependent pump, pulling dsDNA into and through the RuvAB complex. RuvB forms 2 homohexamers on either side of HJ DNA bound by 1 or 2 RuvA tetramers; 4 subunits per hexamer contact DNA at a time. Coordinated motions by a converter formed by DNA-disengaged RuvB subunits stimulates ATP hydrolysis and nucleotide exchange. Immobilization of the converter enables RuvB to convert the ATP-contained energy into a lever motion, pulling 2 nucleotides of DNA out of the RuvA tetramer per ATP hydrolyzed, thus driving DNA branch migration. The RuvB motors rotate together with the DNA substrate, which together with the progressing nucleotide cycle form the mechanistic basis for DNA recombination by continuous HJ branch migration. Branch migration allows RuvC to scan DNA until it finds its consensus sequence, where it cleaves and resolves cruciform DNA. The protein is Holliday junction branch migration complex subunit RuvB of Corynebacterium glutamicum (strain R).